The chain runs to 508 residues: Protein ultraspiracle (508 aa).

The segment at 1–103 (MDNCDQDASF…NHPLSGSKHL (103 aa)) is modulating. Disordered stretches follow at residues 21 to 40 (PDIS…KAES) and 55 to 92 (PGSN…QQYP). Residues 24 to 35 (SQLNDSNNSSFS) are compositionally biased toward polar residues. Ser-35 is subject to Phosphoserine. Low complexity predominate over residues 57–90 (SNSASSNNNSAGDAQMAQAPNSAGGSAAAAVQQQ). 2 consecutive NR C4-type zinc fingers follow at residues 104–124 (CSIC…CEGC) and 140–164 (CREN…YQKC). The segment at residues 104 to 169 (CSICGDRASG…RYQKCLTCGM (66 aa)) is a DNA-binding region (nuclear receptor). Residues 170–223 (KREAVQEERQRGARNAAGRLSASGGGSSGPGSVGGSSSQGGGGGGGVSGGMGSG) form a hinge region. Positions 178–228 (RQRGARNAAGRLSASGGGSSGPGSVGGSSSQGGGGGGGVSGGMGSGNGSDD) are disordered. A compositionally biased stretch (gly residues) spans 192-224 (SGGGSSGPGSVGGSSSQGGGGGGGVSGGMGSGN). One can recognise an NR LBD domain in the interval 239–498 (SIERIIEAEQ…ELFLEQLEAP (260 aa)).

This sequence belongs to the nuclear hormone receptor family. NR2 subfamily. In terms of assembly, heterodimer of USP and ECR. Only the heterodimer is capable of high-affinity binding to ecdysone.

It is found in the nucleus. Functionally, receptor for ecdysone. May be an important modulator of insect metamorphosis. Plays an important part in embryonic and post-embryonic development. Binds to ecdysone response elements (ECRES) such as in the promoter region of s15 chorion gene. The sequence is that of Protein ultraspiracle (usp) from Drosophila melanogaster (Fruit fly).